A 486-amino-acid polypeptide reads, in one-letter code: MASNRFQNLQNWTNKHVFSNSLDYWNQELNEVPSYQNQPQTGESGSNPPPHDRLEPIQESVVSEQPQKDDINKQEEAKDDGHGEASEPISALQAAWNVTNAIQGMFIVGLPIAVKVGGWWSIGAMVGVAYVCYWTGVLLIECLYENGVKKRKTYREIADFYKPGFGKWVLAAQLTELLSTCIIYLVLAADLLQSCFPSVDKAGWMMITSASLLTCSFLDDLQIVSRLSFFNAISHLIVNLIMVLYCLSFVSQWSFSTITFSLNINTLPTIVGMVVFGYTSHIFLPNLEGNMKNPAQFNVMLKWSHIAAAVFKVVFGMLGFLTFGELTQEEISNSLPNQSFKILVNLILVVKALLSYPLPFYAAVQLLKNNLFLGYPQTPFTSCYSPDKSLREWAVTLRIILVLFTLFVALSVPYLVELMGLVGNITGTMLSFIWPALFHLYIKEKTLNNFEKRFDQGIIIMGCSVCISGVYFSSMELLRAINSADS.

At 1 to 93 (MASNRFQNLQ…EASEPISALQ (93 aa)) the chain is on the cytoplasmic side. The span at 29–46 (LNEVPSYQNQPQTGESGS) shows a compositional bias: polar residues. Residues 29–85 (LNEVPSYQNQPQTGESGSNPPPHDRLEPIQESVVSEQPQKDDINKQEEAKDDGHGEA) are disordered. The span at 66–85 (PQKDDINKQEEAKDDGHGEA) shows a compositional bias: basic and acidic residues. The helical transmembrane segment at 94–114 (AAWNVTNAIQGMFIVGLPIAV) threads the bilayer. Residues 115–119 (KVGGW) are Lumenal, vesicle-facing. The chain crosses the membrane as a helical span at residues 120–140 (WSIGAMVGVAYVCYWTGVLLI). Topologically, residues 141–167 (ECLYENGVKKRKTYREIADFYKPGFGK) are cytoplasmic. The helical transmembrane segment at 168–188 (WVLAAQLTELLSTCIIYLVLA) threads the bilayer. Residues 189–203 (ADLLQSCFPSVDKAG) lie on the Lumenal, vesicle side of the membrane. The chain crosses the membrane as a helical span at residues 204–224 (WMMITSASLLTCSFLDDLQIV). Over 225–228 (SRLS) the chain is Cytoplasmic. The helical transmembrane segment at 229–249 (FFNAISHLIVNLIMVLYCLSF) threads the bilayer. Over 250 to 263 (VSQWSFSTITFSLN) the chain is Lumenal, vesicle. The helical transmembrane segment at 264 to 284 (INTLPTIVGMVVFGYTSHIFL) threads the bilayer. At 285–305 (PNLEGNMKNPAQFNVMLKWSH) the chain is on the cytoplasmic side. A helical membrane pass occupies residues 306–326 (IAAAVFKVVFGMLGFLTFGEL). Topologically, residues 327-341 (TQEEISNSLPNQSFK) are lumenal, vesicle. Asn337 carries N-linked (GlcNAc...) asparagine glycosylation. Residues 342–362 (ILVNLILVVKALLSYPLPFYA) form a helical membrane-spanning segment. Residues 363–398 (AVQLLKNNLFLGYPQTPFTSCYSPDKSLREWAVTLR) lie on the Cytoplasmic side of the membrane. Residues 399–419 (IILVLFTLFVALSVPYLVELM) traverse the membrane as a helical segment. At 420–421 (GL) the chain is on the lumenal, vesicle side. A helical membrane pass occupies residues 422–442 (VGNITGTMLSFIWPALFHLYI). Residues 443-457 (KEKTLNNFEKRFDQG) lie on the Cytoplasmic side of the membrane. Residues 458-478 (IIIMGCSVCISGVYFSSMELL) form a helical membrane-spanning segment. At 479–486 (RAINSADS) the chain is on the lumenal, vesicle side.

It belongs to the amino acid/polyamine transporter 2 family.

It is found in the cytoplasmic vesicle membrane. In terms of biological role, involved in the uptake of GABA into the synaptic vesicles. The protein is Vesicular GABA transporter (unc-47) of Caenorhabditis elegans.